A 381-amino-acid chain; its full sequence is CD2 homolog (381 aa).

The N-terminal stretch at 1 to 16 is a signal peptide; it reads MIIKLIFLICFKIVLS. At 17–208 the chain is on the extracellular side; it reads INYWVRYNDT…QNYFLENIHT (192 aa). 12 N-linked (GlcNAc...) asparagine; by host glycosylation sites follow: Asn-24, Asn-73, Asn-77, Asn-85, Asn-91, Asn-104, Asn-121, Asn-133, Asn-144, Asn-176, Asn-183, and Asn-189. 2 disulfides stabilise this stretch: Cys-122–Cys-190 and Cys-129–Cys-173. The chain crosses the membrane as a helical span at residues 209-229; it reads LFYMIIFIVSGITISIFISII. The Cytoplasmic portion of the chain corresponds to 230–381; sequence TFLSLRKRKK…ISLIHVDRII (152 aa). The tract at residues 243–278 is disordered; it reads EIESPPPESNEEEQCQHDDTTSIHEPSPREPLLPKP. The span at 256–270 shows a compositional bias: basic and acidic residues; the sequence is QCQHDDTTSIHEPSP. 7 tandem repeats follow at residues 305–310, 311–316, 317–322, 323–328, 329–334, 335–340, and 341–346. A 7 X 6 AA tandem repeats of K-[LP]-C-[PRS]-[PS]-[PS] region spans residues 305–334; that stretch reads KPCPPPKPCPPPKPCPPPKPCPPPKPCPPP. Residues 341–362 are disordered; sequence KPCPPPESYSPPKPLPSIPLLP.

Belongs to the asfivirus CD2 homolog protein family. As to quaternary structure, both glycosylated and nonglycosylated forms interact (via C-terminus) with the host AP-1 complex. Post-translationally, cleaved into two fragments of 63 kDa and 26 kDa containing respectively the glycosylated N-terminus and the nonglycosylated C-terminus. A full-length 89-kDa glycosylated form also exists.

The protein localises to the host membrane. It localises to the virion membrane. The protein resides in the host Golgi apparatus. May play an immunosuppressive role by inhibiting lymphocyte proliferation and subsequently facilitating viral replication and generalization of infection. Responsible for viral hemadsorption, which may help viral spread. Increases virus replication in the tick vector at the step of virus uptake or replication in the tick gut. May play a role in the host Golgi reorganization to yield viral factories. May play a role in host cell penetration. This chain is CD2 homolog, found in African swine fever virus (isolate Warthog/Namibia/Wart80/1980) (ASFV).